We begin with the raw amino-acid sequence, 220 residues long: Elongation factor Ts, chloroplastic (220 aa).

It belongs to the EF-Ts family.

It is found in the plastid. It localises to the chloroplast. In terms of biological role, associates with the EF-Tu.GDP complex and induces the exchange of GDP to GTP. It remains bound to the aminoacyl-tRNA.EF-Tu.GTP complex up to the GTP hydrolysis stage on the ribosome. The protein is Elongation factor Ts, chloroplastic (tsf) of Porphyra purpurea (Red seaweed).